A 220-amino-acid chain; its full sequence is uncharacterized protein (220 aa).

The next 7 membrane-spanning stretches (helical) occupy residues 6 to 26, 33 to 53, 59 to 79, 103 to 123, 126 to 146, 157 to 177, and 179 to 199; these read FSIL…LIVW, IVRL…LRGI, ALIA…PWLL, LLIT…VVNL, GVTI…LFVM, AGFL…TAGV, and LIVE…IGVL.

The protein localises to the cell membrane. This is an uncharacterized protein from Mycobacterium tuberculosis (strain ATCC 25618 / H37Rv).